A 289-amino-acid polypeptide reads, in one-letter code: ATP synthase gamma chain (289 aa).

The protein belongs to the ATPase gamma chain family. In terms of assembly, F-type ATPases have 2 components, CF(1) - the catalytic core - and CF(0) - the membrane proton channel. CF(1) has five subunits: alpha(3), beta(3), gamma(1), delta(1), epsilon(1). CF(0) has three main subunits: a, b and c.

The protein resides in the cell membrane. In terms of biological role, produces ATP from ADP in the presence of a proton gradient across the membrane. The gamma chain is believed to be important in regulating ATPase activity and the flow of protons through the CF(0) complex. This Lactococcus lactis subsp. cremoris (strain SK11) protein is ATP synthase gamma chain.